The primary structure comprises 542 residues: Chaperonin GroEL 1 (542 aa).

Residues 30-33 (TLGP), Lys51, 87-91 (DGTTT), Gly415, 480-482 (NAA), and Asp496 each bind ATP.

This sequence belongs to the chaperonin (HSP60) family. Forms a cylinder of 14 subunits composed of two heptameric rings stacked back-to-back. Interacts with the co-chaperonin GroES.

Its subcellular location is the cytoplasm. The enzyme catalyses ATP + H2O + a folded polypeptide = ADP + phosphate + an unfolded polypeptide.. Functionally, together with its co-chaperonin GroES, plays an essential role in assisting protein folding. The GroEL-GroES system forms a nano-cage that allows encapsulation of the non-native substrate proteins and provides a physical environment optimized to promote and accelerate protein folding. This Nitrobacter winogradskyi (strain ATCC 25391 / DSM 10237 / CIP 104748 / NCIMB 11846 / Nb-255) protein is Chaperonin GroEL 1.